Here is a 28-residue protein sequence, read N- to C-terminus: Potassium channel toxin alpha-KTx 9.5 (28 aa).

3 disulfide bridges follow: cysteine 3/cysteine 19, cysteine 6/cysteine 24, and cysteine 10/cysteine 26. Position 28 is a valine amide (valine 28).

Expressed by the venom gland.

Its subcellular location is the secreted. Blocks voltage-gated potassium channels Kv1.1/KCNA1 (IC(50)=145 nM), Kv1.2/KCNA2 (IC(50)=2.5 nM), and Kv1.3/KCNA3 (IC(50)=15). Also inhibits calcium-activated potassium channels (KCa/KCNN). This chain is Potassium channel toxin alpha-KTx 9.5, found in Buthus occitanus tunetanus (Common European scorpion).